The sequence spans 424 residues: Phosphomethylpyrimidine synthase (424 aa).

Substrate is bound by residues Met94, Tyr123, His162, 184–186 (SRG), 225–228 (NGMR), and Glu264. His268 contributes to the Zn(2+) binding site. Tyr291 is a substrate binding site. His332 is a Zn(2+) binding site. [4Fe-4S] cluster contacts are provided by Cys406, Cys409, and Cys413.

It belongs to the ThiC family. Requires [4Fe-4S] cluster as cofactor.

The enzyme catalyses 5-amino-1-(5-phospho-beta-D-ribosyl)imidazole + S-adenosyl-L-methionine = 4-amino-2-methyl-5-(phosphooxymethyl)pyrimidine + CO + 5'-deoxyadenosine + formate + L-methionine + 3 H(+). It participates in cofactor biosynthesis; thiamine diphosphate biosynthesis. Catalyzes the synthesis of the hydroxymethylpyrimidine phosphate (HMP-P) moiety of thiamine from aminoimidazole ribotide (AIR) in a radical S-adenosyl-L-methionine (SAM)-dependent reaction. This chain is Phosphomethylpyrimidine synthase, found in Methanosphaerula palustris (strain ATCC BAA-1556 / DSM 19958 / E1-9c).